A 343-amino-acid polypeptide reads, in one-letter code: N-acetyl-gamma-glutamyl-phosphate reductase (343 aa).

Cys-147 is an active-site residue.

It belongs to the NAGSA dehydrogenase family. Type 1 subfamily.

Its subcellular location is the cytoplasm. It catalyses the reaction N-acetyl-L-glutamate 5-semialdehyde + phosphate + NADP(+) = N-acetyl-L-glutamyl 5-phosphate + NADPH + H(+). It participates in amino-acid biosynthesis; L-arginine biosynthesis; N(2)-acetyl-L-ornithine from L-glutamate: step 3/4. Functionally, catalyzes the NADPH-dependent reduction of N-acetyl-5-glutamyl phosphate to yield N-acetyl-L-glutamate 5-semialdehyde. The chain is N-acetyl-gamma-glutamyl-phosphate reductase from Staphylococcus aureus (strain USA300).